The chain runs to 84 residues: Putative UPF0320 protein YNL337W (84 aa).

It belongs to the UPF0320 family.

This Saccharomyces cerevisiae (strain ATCC 204508 / S288c) (Baker's yeast) protein is Putative UPF0320 protein YNL337W.